Consider the following 4568-residue polypeptide: MAEDEGMTAAAPSSSVKDIRFDYIRDRVCSCLKVPDSAYDKLVSGDGRTSLVQFMEEAHTKRLLIMLDGKDLSATVKPPPKFKKKTVYFLKLQETKLDNDNIKKLVIHGEISENPLETLAAISQDVFMPVLTAPANQQGWPDVVAKEVTENLHKFVSNVFVTIGQMKGQTLLPLPPQNTVPTLQPEQSMHSLKDQDKIHILESAIVTWTKQIKNVLKADPDAPLKEPGAYPGPLTELNFWSERAANLNSIHEQLTSEKTQKVVKVLELAKSTYYPAFQRLFREVEAAQQEANDNVKFLKPLRKYLDKLNMMDDFPMLVDLFKPIMHTLMLIWKHSKSYNSSTRFVTLMQEICNDLIMQACKYVPGSDLIQMEPSEAVDKLRMTLRWLGTFKNYYFEYRALSMQDTPENPWKFQNNSLFARLDSFLERCHDMMDLMSTCMQFNRLERVEIGGTKGKVLTNGVKAIHQDFTSAVEKFQQVTYDVMDVDAKQFDEDFFGFRVVIKELERRLAAIIIQAFDDCTTIGTTFKLLDSFEGLLDREVIAHDLEKKHTDLLHSYARDLKDVADLFHQYKDRPIVAKNSAPYSGAAYWVRGLMERIKDPMDRLLTMNKMVLESELFREIQRTYDHLWEEMTEYRTRAVDAWCAQVAATSDEKLNLPLLSLIEETADGIRVLGVNFDPALVRLLRETKYFLLLETSTQDKNADRNAEKAAEGGEVEVVKKAPKLSVPDSAKDLFASADTFRQQISALDLICSIYNKVQRTILAVEKPLVQQKLDAVEQALNRGLAELNWKCAEIDTYIKECMELVKDVDLVLNTIKDNVKATQGILAMWEKNLMFERKDGKTYTFDELNDAFNQLIQQRHSEIRDAGKEITKLLSSSNRVLKVSKGAASWRAYVDYFSNIVIDGFSAAIISTVRYLLSQIDPDILAKTESSPLLEIQVELVAPDIVWKPDLGEGGAKPGLRDMIKKWLQSFLEIGQLMKRLDVGEGNYAKELEEDFEVYDALNQVMMVTLANESRCEDFKNQFAKFDYLWKQDLQATLQQFITDNGVTLPDGTRDDPPLAKFEEQIVKYKNVASEIASFKDTMTMGYVKVNAKPLRQALSTWASKWVYLFTHYLQEKVVNSITELYTFMDTSNSTLDLKVMGEGVEEEPEYHPDQDPEEAAAKKAAEEEEKRKALYAIMACMRDIRRRTERGTDTMFEPLKETVTALHTFGIQLSDTVLHQLDNAEFNWRTLKKKMLNRREQLAPLQQAEAVEIRRKSDAFNERVEDFRTFFQRKAPFAVSGGELKLEQVKPAYKLLDEFRSGSLEGYPSVLGIIAESKQLQEAQDLFELYQPGYLQLQRCSEELGHLKSLWDTVGTVMFTFRDWYKTPWDKIDVDFLVEETKKLSKDIKMLNKAVRNYDVYRMLEEAIKAVLTSLPLVQDLHHPAMRERHWKLLMQTTGKHFVMDDKFCLGDLLALELHNYVDACSEIVDRAQKELNIEKQLKKIEDTWAGLSLAFSTYQDSDVMALLVDDAVNEALEADNLQLQNLSGQKYVQSNPMFLETVSKWQNNMGRVSAVLETWQNVQKKWQNLESIFIGSADIRVQLPEDSKRFDAVNADFQELMRTAPDITNVVEACTLDGRQERLENMQSMLEQCEKALQEYLETKRVAFPRFYFVSPADLLDILSKGSNPQLILRHLQKCFDNIDNLSFRKDERGDPTKIATHMHSKEGEVVEFVEDCSCDGPVEVWLQNVVDSMKLALQVEFRKAIPTYDELPRTKWIYVYSAQNTVVVSRTFFTQEINEAFDDLEEGNEEALKVELDRQVQQLADLIDEINKEQTSLDRKKLITLCTIDVHSRDLVQKLIDERVEDQMCFQWQSQLRYIQSEKTKTCQVNICDAEIAYSYEYIGNCGCLCITPLTDRCFITLTQAQRLVLGGAPAGPAGTGKTETTKDLARALGIQCYVFNCSDQMDYKAMGHTYKGLAQTGAWGCFDEFNRIPVAVLSVCSTQYKTVLDAIRAKKERFTFEDADISLKSTVMAFITMNPGYPGRAELPESLKALFRPVSMVVPDLALICEIMLMAEGFQMSKILSRKFVILYKLCEDLLSKSRHYDWKLRAIKTTLYVAGGMKRAAPELSEDKVLLRALRDFNLGKLTADDTSIFMGLLNDLFPKTLELVPRALDKAFDEAAHKAATELGYQPDDQFLLKISHVRELFVVRWSVFLLGAAGCGKTAVWRTLLRAQNSSGEKTIYQAVNPKAVTRNELYGYLHPATREWKEGLMSVTFRNMANNKTNKHQWIVLDGDIDAEWIESMNTVMDDNKMLTLASNERIPLTPSMRLLLEINHMVHCSPATVSRGGVIFINADDVGWQPVVASWIDKLEAAEYRPLLTALFTKYVDPCLEHCRRNFKTVVPLPAVNQAMTICKILEGILPKETVRGAPPPDKKLLHYHFVFACVWAFGGCMLVDKVTDYRTQFSKWWVSEWKDVQFPEKGLVYDYYVDEQNCIMVPWEDRVTKFQYIPGDFTSLFVPTVETTRLTYFLDSLVSNKHYAMFVGNTGTGKSAIMVNKLRNMDTETMSFYTINMNSLSEAPALQVILEQPLEKKSGVRYGPPGSRRMVYFVDDMNMPLVDKYDTQSSIELLRQMVDYHGWYDKVKIQLKEIINCQMAACMNPTAGSFNITPRMQRHFVTFAVQMPNAEITRAMYYQIIDGHFSSFDVDVAKMSNKLVDATCELHRNVMHNFLPSAVKFHYQFNLRDLSNITQGLTRAIKEYYREPVKVARLWVHECERVFRDRMINEADMAKFDEFRVAVTKKFFDDCGGMVAIEERPLIYASHASMTYTPEDVPVYNALSSYDVLRKTLEDKLREYNESNAVMDLVLFQQAMEHVTRIARIIDLPRGNAMLVGVGGSGKQSLARLASYICGYEVYQISVSSTYGINDFKENLLGLYRKAGTKGTPITFLMTDNQIVKEGFLVYINDLLSTGYIADLFTPEDKEAFTNAVRNEVKAAGILDSAENCWDFFIDKVRKFLHIVLCFSPVGDKFRIRARQFPALVNCTMFDWFHGWPGEALVSVAQRFLVDVPNMEEVVRENIAYHMAYAHQCVSEASERFKEAFRRYNYTTPKSYLELISLYKMLLQLKRDDLRRSKERLENGIDKIAQAAAQVTDLQRVLKEEQIVVDEKKAQTDELIVSIGKEKAIVDQAVEAGREDEEAATALQTEVSAFQAECERDLLEAEPIIAQAEAALNSLNKKELSELKSFGSPAAEIVQVAAACLVLTCGGKIPKDRDWNAGKKMMADVNSFLSSLMNFDKDNVPVVCVEVVEKDYISNPGFTPDNIKGKSAACAGLCSWVINICKYFRIYQVVAPKRAALAEANKKLDTANKKLKVIRDEVKRLQDRVALLEQSLMKATEDKNAAIAQADRTARKAQMAERLINGLSGENTRWGAEIKRLESLEGRLVGDVLIASAFVSYAGPFNMQFRKSLVDEKWLPDIIERQIPMTQGIRPLDLLTDDATKAKWANEGLPTDPLSVENGAIMSNASRWALMIDPQLQGIKWIINKETNNGLVIIQQSQPKYIDQVINCIENGWPLLIENLPVDIDAVLDPVIGKMTIKKGRNIIMKIGDAEVQYDSRFRLYLQTKLSNPHFKPEVAAQTTLVNFCVTEKGLEDQLLALVVDHERPDLQEQAAGLVRSLNEYNITLVELENNLLFNLANATGNILENIELIEGLEETKRTAVEIEEKVKLAKQTEIQIAKAREVYRPVATRGSLTYFLIDNLNALDRVYHYSMANFVFVLKKGMDMTPGGKDESKVPLAERLNQEVDLDKRVELLVETTCFVLIGYVAQGLFERHKLIVATQLCMQILRSRGELHYAKFEYLLRGPKVMGADNPLHDWVSDSVWGSVQALKELDDYQGLPEDLIGSSKRWREWMELERPEDEPLPGDWKRMQEFDKLLLFRALRPDRLTSAMGRFVTNMLGAKYVTSQPYDLERSYQDASPGTPIFVFLSPGVDVAGSVEALGKKLGFTLDNGKYASVSLGQGQEPIAMDRLSAAHKNGGWVLLQNIHLTIDWTTNQLDKKVDKLVEGAHPDFRLFLSAEPPPSLERGLPISLLQNSIKLTNEPARGLKANLRRAWNNFNEEILESCAKQAEFRAIVFALCYFHAALLERKKFGVGNLPGARSGIGWNMNYPFNTGDLLCCGQTANNYLENNVKVPWEDLRYNFGEIMYGGHIVEDYDRRLAMCYLRKYVNEGLLDNMEFFPGFAMPPNTANHRQVLEFIDEVMPPETPLAFGLHPNAEIGFKLREAESFCNSLVQLQPRESSGEGGMSAEERAKLVLDEVVDKLPDIFDMEDVRSKINPDDPNMPFVMVAIQESERMNMLLAEMKRSLLELDLGLKGDLTMTEPMERLLKALATDAVPGSWRNLAYPSLRPLGSWLGNLLARHAQLVDWTAELSTPKAVWLSGLFNPQSFLTAVMQATARRNDWPLDKTVIITEVTKKQPDQIEANSRDGAFIHGLTLEGARWDDKIGALDDSKPKELFCPMPVILVRAVTQDKAEMKDVYKCPVYTTEARFREEVFEAQLKSKHTEIKWVLAGVCLFLDVV.

The stem stretch occupies residues methionine 1–alanine 1880. Coiled-coil stretches lie at residues phenylalanine 277–aspartate 293, glutamate 1158–leucine 1175, lysine 1372–aspartate 1400, glutamate 1614–phenylalanine 1650, and glutamine 1778–leucine 1825. The tract at residues glycine 1144–alanine 1166 is disordered. A compositionally biased stretch (basic and acidic residues) spans glutamate 1150–alanine 1166. 4 AAA regions span residues tyrosine 1881 to valine 2102, glutamate 2164 to lysine 2385, glutamine 2493 to glycine 2738, and glutamate 2841 to tyrosine 3090. ATP contacts are provided by residues glycine 1919–threonine 1926, glycine 2202–threonine 2209, and glycine 2530–serine 2537. Positions leucine 2831–valine 2848 form a coiled coil. Position 2879–2886 (glycine 2879–glutamine 2886) interacts with ATP. Coiled-coil stretches lie at residues lysine 3106 to isoleucine 3162, lysine 3339 to serine 3425, and histidine 3648 to glutamate 3728. The tract at residues lysine 3106–serine 3425 is stalk. 2 AAA regions span residues leucine 3481 to glutamate 3711 and methionine 3937 to asparagine 4172.

It belongs to the dynein heavy chain family. In terms of assembly, consists of at least 3 heavy chains (alpha, beta and gamma), 2 intermediate chains and 8 light chains.

The protein resides in the cell projection. It is found in the cilium. Its subcellular location is the flagellum. It localises to the cytoplasm. The protein localises to the cytoskeleton. The protein resides in the flagellum axoneme. Force generating protein of eukaryotic cilia and flagella. Produces force towards the minus ends of microtubules. Dynein has ATPase activity; the force-producing power stroke is thought to occur on release of ADP. The chain is Dynein beta chain, flagellar outer arm (ODA4) from Chlamydomonas reinhardtii (Chlamydomonas smithii).